The following is a 483-amino-acid chain: 2-methylcitrate dehydratase (483 aa).

It belongs to the PrpD family. In terms of assembly, monomer.

The enzyme catalyses (2S,3S)-2-methylcitrate = 2-methyl-cis-aconitate + H2O. The catalysed reaction is citrate = D-threo-isocitrate. It participates in organic acid metabolism; propanoate degradation. The protein operates within carbohydrate metabolism; tricarboxylic acid cycle; isocitrate from oxaloacetate: step 2/2. In terms of biological role, involved in the catabolism of short chain fatty acids (SCFA) via the tricarboxylic acid (TCA)(acetyl degradation route) and via the 2-methylcitrate cycle I (propionate degradation route). Catalyzes the dehydration of 2-methylcitrate (2-MC) to yield the cis isomer of 2-methyl-aconitate. It is also able to catalyze the dehydration of citrate and the hydration of cis-aconitate at a lower rate. Due to its broad substrate specificity, it seems to be responsible for the residual aconitase activity of the acnAB-null mutant. The protein is 2-methylcitrate dehydratase of Escherichia coli (strain K12).